The primary structure comprises 692 residues: Methionine--tRNA ligase (692 aa).

The 'HIGH' region signature appears at 15–25 (PYANGPIHLGH). Positions 146, 149, 159, and 162 each coordinate Zn(2+). Positions 332 to 336 (KMSKS) match the 'KMSKS' region motif. K335 is a binding site for ATP. Positions 552–577 (TTEAAPEKKAKKSAETADVAVDTRSP) are disordered. Residues 556–566 (APEKKAKKSAE) show a composition bias toward basic and acidic residues. Residues 591–692 (DFAKLDLRIA…EGAQPGMRVK (102 aa)) enclose the tRNA-binding domain.

This sequence belongs to the class-I aminoacyl-tRNA synthetase family. MetG type 1 subfamily. Homodimer. It depends on Zn(2+) as a cofactor.

Its subcellular location is the cytoplasm. It catalyses the reaction tRNA(Met) + L-methionine + ATP = L-methionyl-tRNA(Met) + AMP + diphosphate. Functionally, is required not only for elongation of protein synthesis but also for the initiation of all mRNA translation through initiator tRNA(fMet) aminoacylation. This is Methionine--tRNA ligase from Shewanella sediminis (strain HAW-EB3).